Here is a 464-residue protein sequence, read N- to C-terminus: Argininosuccinate lyase (464 aa).

It belongs to the lyase 1 family. Argininosuccinate lyase subfamily.

Its subcellular location is the cytoplasm. The enzyme catalyses 2-(N(omega)-L-arginino)succinate = fumarate + L-arginine. Its pathway is amino-acid biosynthesis; L-arginine biosynthesis; L-arginine from L-ornithine and carbamoyl phosphate: step 3/3. This Pseudomonas aeruginosa (strain ATCC 15692 / DSM 22644 / CIP 104116 / JCM 14847 / LMG 12228 / 1C / PRS 101 / PAO1) protein is Argininosuccinate lyase.